Consider the following 76-residue polypeptide: Acyl carrier protein (76 aa).

The Carrier domain maps to 1-76 (MSVEEKISKI…DAIAYIKNKQ (76 aa)). S36 is modified (O-(pantetheine 4'-phosphoryl)serine).

The protein belongs to the acyl carrier protein (ACP) family. 4'-phosphopantetheine is transferred from CoA to a specific serine of apo-ACP by AcpS. This modification is essential for activity because fatty acids are bound in thioester linkage to the sulfhydryl of the prosthetic group.

The protein resides in the cytoplasm. It functions in the pathway lipid metabolism; fatty acid biosynthesis. Carrier of the growing fatty acid chain in fatty acid biosynthesis. The protein is Acyl carrier protein of Nitratidesulfovibrio vulgaris (strain DSM 19637 / Miyazaki F) (Desulfovibrio vulgaris).